A 70-amino-acid polypeptide reads, in one-letter code: Large ribosomal subunit protein bL31 (70 aa).

Residues Cys16, Cys18, Cys37, and Cys40 each coordinate Zn(2+).

Belongs to the bacterial ribosomal protein bL31 family. Type A subfamily. In terms of assembly, part of the 50S ribosomal subunit. Zn(2+) is required as a cofactor.

Its function is as follows. Binds the 23S rRNA. This chain is Large ribosomal subunit protein bL31, found in Colwellia psychrerythraea (strain 34H / ATCC BAA-681) (Vibrio psychroerythus).